A 570-amino-acid chain; its full sequence is Proline--tRNA ligase (570 aa).

It belongs to the class-II aminoacyl-tRNA synthetase family. ProS type 1 subfamily. As to quaternary structure, homodimer.

It is found in the cytoplasm. It carries out the reaction tRNA(Pro) + L-proline + ATP = L-prolyl-tRNA(Pro) + AMP + diphosphate. Functionally, catalyzes the attachment of proline to tRNA(Pro) in a two-step reaction: proline is first activated by ATP to form Pro-AMP and then transferred to the acceptor end of tRNA(Pro). As ProRS can inadvertently accommodate and process non-cognate amino acids such as alanine and cysteine, to avoid such errors it has two additional distinct editing activities against alanine. One activity is designated as 'pretransfer' editing and involves the tRNA(Pro)-independent hydrolysis of activated Ala-AMP. The other activity is designated 'posttransfer' editing and involves deacylation of mischarged Ala-tRNA(Pro). The misacylated Cys-tRNA(Pro) is not edited by ProRS. This Geotalea daltonii (strain DSM 22248 / JCM 15807 / FRC-32) (Geobacter daltonii) protein is Proline--tRNA ligase.